The primary structure comprises 63 residues: MNNKINNIKITQIKSAIGCKYDQRFTLIGLGLNKINKSVILKNTNSIRGMVEKVKHLLKIENM.

The protein belongs to the universal ribosomal protein uL30 family. In terms of assembly, part of the 50S ribosomal subunit.

This is Large ribosomal subunit protein uL30 from Rickettsia prowazekii (strain Madrid E).